The chain runs to 206 residues: Pyridoxine/pyridoxamine 5'-phosphate oxidase (206 aa).

Residues 53-58 (RMVLLK), 68-69 (YT), Lys75, and Gln97 contribute to the FMN site. Lys58 contacts substrate. Substrate-binding residues include Tyr115, Arg119, and Ser123. FMN-binding positions include 132 to 133 (QS) and Trp177. 183-185 (RLH) contributes to the substrate binding site. Arg187 contributes to the FMN binding site.

This sequence belongs to the pyridoxamine 5'-phosphate oxidase family. In terms of assembly, homodimer. FMN serves as cofactor.

It catalyses the reaction pyridoxamine 5'-phosphate + O2 + H2O = pyridoxal 5'-phosphate + H2O2 + NH4(+). The catalysed reaction is pyridoxine 5'-phosphate + O2 = pyridoxal 5'-phosphate + H2O2. The protein operates within cofactor metabolism; pyridoxal 5'-phosphate salvage; pyridoxal 5'-phosphate from pyridoxamine 5'-phosphate: step 1/1. It participates in cofactor metabolism; pyridoxal 5'-phosphate salvage; pyridoxal 5'-phosphate from pyridoxine 5'-phosphate: step 1/1. Functionally, catalyzes the oxidation of either pyridoxine 5'-phosphate (PNP) or pyridoxamine 5'-phosphate (PMP) into pyridoxal 5'-phosphate (PLP). The polypeptide is Pyridoxine/pyridoxamine 5'-phosphate oxidase (Rhizobium meliloti (strain 1021) (Ensifer meliloti)).